The primary structure comprises 303 residues: Nucleotide-binding protein USA300HOU_0794 (303 aa).

18–25 (GLSGAGKS) lines the ATP pocket. Position 69 to 72 (69 to 72 (DLRG)) interacts with GTP.

The protein belongs to the RapZ-like family.

In terms of biological role, displays ATPase and GTPase activities. The sequence is that of Nucleotide-binding protein USA300HOU_0794 from Staphylococcus aureus (strain USA300 / TCH1516).